Consider the following 42-residue polypeptide: Cytochrome b6-f complex subunit 7 (42 aa).

The chain crosses the membrane as a helical span at residues isoleucine 15–alanine 35.

It belongs to the PetM family. The 4 large subunits of the cytochrome b6-f complex are cytochrome b6, subunit IV (17 kDa polypeptide, PetD), cytochrome f and the Rieske protein, while the 4 small subunits are PetG, PetL, PetM and PetN. The complex functions as a dimer.

It is found in the plastid. The protein localises to the chloroplast thylakoid membrane. In terms of biological role, component of the cytochrome b6-f complex, which mediates electron transfer between photosystem II (PSII) and photosystem I (PSI), cyclic electron flow around PSI, and state transitions. This Trieres chinensis (Marine centric diatom) protein is Cytochrome b6-f complex subunit 7.